The primary structure comprises 580 residues: Negative elongation factor B (580 aa).

Position 519 is an N6-acetyllysine (Lys519). A disordered region spans residues 548-580; sequence LEQLDHRKPSPAQAAETPALELPLPSVPAPAPL. A Phosphoserine modification is found at Ser557.

It belongs to the NELF-B family. In terms of assembly, the NELF complex is composed of NELFA, NELFB, NELFCD (isoform NELF-C or isoform NELF-D) and NELFE; the N-terminus of NELFB binds to the NELFA:NELFCD subcomplex. Binds RNA which may help to stabilize the NELF complex on nucleic acid. Interacts with the first BRCT repeat of BRCA1. Interacts with KIAA1191. Interacts with NELFE. In terms of tissue distribution, widely expressed. Expressed in heart, brain, lung, placenta, liver, skeletal muscle, kidney and pancreas.

It localises to the nucleus. Functionally, essential component of the NELF complex, a complex that negatively regulates the elongation of transcription by RNA polymerase II. The NELF complex, which acts via an association with the DSIF complex and causes transcriptional pausing, is counteracted by the P-TEFb kinase complex. May be able to induce chromatin unfolding. Essential for early embryogenesis; plays an important role in maintaining the undifferentiated state of embryonic stem cells (ESCs) by preventing unscheduled expression of developmental genes. Plays a key role in establishing the responsiveness of stem cells to developmental cues; facilitates plasticity and cell fate commitment in ESCs by establishing the appropriate expression level of signaling molecules. Supports the transcription of genes involved in energy metabolism in cardiomyocytes; facilitates the association of transcription initiation factors with the promoters of the metabolism-related genes. Its function is as follows. (Microbial infection) The NELF complex is involved in HIV-1 latency possibly involving recruitment of PCF11 to paused RNA polymerase II. In vitro, binds weakly to the HIV-1 TAR RNA which is located in the long terminal repeat (LTR) of HIV-1. The sequence is that of Negative elongation factor B (NELFB) from Homo sapiens (Human).